The chain runs to 274 residues: 3-methyl-2-oxobutanoate hydroxymethyltransferase (274 aa).

Residues aspartate 49 and aspartate 88 each coordinate Mg(2+). Residues 49-50 (DS), aspartate 88, and lysine 118 each bind 3-methyl-2-oxobutanoate. Glutamate 120 is a Mg(2+) binding site. Glutamate 187 acts as the Proton acceptor in catalysis.

It belongs to the PanB family. In terms of assembly, homodecamer; pentamer of dimers. It depends on Mg(2+) as a cofactor.

It localises to the cytoplasm. It carries out the reaction 3-methyl-2-oxobutanoate + (6R)-5,10-methylene-5,6,7,8-tetrahydrofolate + H2O = 2-dehydropantoate + (6S)-5,6,7,8-tetrahydrofolate. It functions in the pathway cofactor biosynthesis; (R)-pantothenate biosynthesis; (R)-pantoate from 3-methyl-2-oxobutanoate: step 1/2. Catalyzes the reversible reaction in which hydroxymethyl group from 5,10-methylenetetrahydrofolate is transferred onto alpha-ketoisovalerate to form ketopantoate. The polypeptide is 3-methyl-2-oxobutanoate hydroxymethyltransferase (Parvibaculum lavamentivorans (strain DS-1 / DSM 13023 / NCIMB 13966)).